The following is a 256-amino-acid chain: F-actin-capping protein subunit beta (256 aa).

M1 carries the N-acetylmethionine modification.

Belongs to the F-actin-capping protein beta subunit family. In terms of assembly, component of the F-actin capping complex, composed of a heterodimer of an alpha and a beta subunit.

The protein localises to the cytoplasm. It localises to the cytoskeleton. F-actin-capping proteins bind in a Ca(2+)-independent manner to the fast growing ends of actin filaments (barbed end) thereby blocking the exchange of subunits at these ends. Unlike other capping proteins (such as gelsolin and severin), these proteins do not sever actin filaments. The polypeptide is F-actin-capping protein subunit beta (Arabidopsis thaliana (Mouse-ear cress)).